The primary structure comprises 349 residues: tRNA pseudouridine synthase D (349 aa).

Residue F27 coordinates substrate. The Nucleophile role is filled by D80. N129 is a binding site for substrate. The TRUD domain occupies 155–303; that stretch reads GVPNYFGAQR…VEAARRAMLL (149 aa). F329 provides a ligand contact to substrate.

It belongs to the pseudouridine synthase TruD family.

The catalysed reaction is uridine(13) in tRNA = pseudouridine(13) in tRNA. Responsible for synthesis of pseudouridine from uracil-13 in transfer RNAs. The protein is tRNA pseudouridine synthase D of Escherichia coli O7:K1 (strain IAI39 / ExPEC).